Consider the following 82-residue polypeptide: Translation initiation factor IF-1, chloroplastic (82 aa).

The 72-residue stretch at 1–72 (MNKQNLIDVE…TKGRIIYRLR (72 aa)) folds into the S1-like domain.

This sequence belongs to the IF-1 family. As to quaternary structure, component of the 30S ribosomal translation pre-initiation complex which assembles on the 30S ribosome in the order IF-2 and IF-3, IF-1 and N-formylmethionyl-tRNA(fMet); mRNA recruitment can occur at any time during PIC assembly.

The protein localises to the plastid. The protein resides in the chloroplast. Its function is as follows. One of the essential components for the initiation of protein synthesis. Stabilizes the binding of IF-2 and IF-3 on the 30S subunit to which N-formylmethionyl-tRNA(fMet) subsequently binds. Helps modulate mRNA selection, yielding the 30S pre-initiation complex (PIC). Upon addition of the 50S ribosomal subunit IF-1, IF-2 and IF-3 are released leaving the mature 70S translation initiation complex. This Cycas taitungensis (Prince sago) protein is Translation initiation factor IF-1, chloroplastic.